The chain runs to 310 residues: Pantoate--beta-alanine ligase (310 aa).

32–39 serves as a coordination point for ATP; the sequence is MGYLHEGH. Residue histidine 39 is the Proton donor of the active site. Glutamine 63 provides a ligand contact to (R)-pantoate. Glutamine 63 contacts beta-alanine. Residue 175–178 coordinates ATP; the sequence is GKKD. A (R)-pantoate-binding site is contributed by glutamine 181. ATP is bound at residue 212-215; sequence MSSR.

This sequence belongs to the pantothenate synthetase family. As to quaternary structure, homodimer. As to expression, expressed in roots, cotyledons, leaves, stems, cauline leaves, stigma, sepals and petals.

It localises to the cytoplasm. Its subcellular location is the cytosol. It catalyses the reaction (R)-pantoate + beta-alanine + ATP = (R)-pantothenate + AMP + diphosphate + H(+). It participates in cofactor biosynthesis; (R)-pantothenate biosynthesis; (R)-pantothenate from (R)-pantoate and beta-alanine: step 1/1. With respect to regulation, enzyme kinetics do not match Michaelis-Menten kinetics, suggesting allosteric behavior. Inhibited by high pantoate levels. Catalyzes the condensation of pantoate with beta-alanine to form pantothenate. Essential for panthotenate biosynthesis. This Arabidopsis thaliana (Mouse-ear cress) protein is Pantoate--beta-alanine ligase.